The sequence spans 225 residues: MKADAKQITHLLKPLRLLLLGAPGSGKGTQTSRLLKQIPQLSSISSGDILRQEIKSESTLGREATTYIAQGKLLPDDLITRLITFRLSALGWLKPSAMWLLDGFPRTTAQASALDELLKQHDASLNLVVELDVPESTILERIENRYVHVPSGRVYNLQYNPPKVPGLDDITGEPLTKRLDDTAEVFKKRLEEYKKTNEPLKDYYKKSGIFGTVSGETSDIIFRNY.

Position 24-29 (24-29 (GSGKGT)) interacts with GTP. An NMP region spans residues 45 to 74 (SSGDILRQEIKSESTLGREATTYIAQGKLL). Residues Ser-46, Arg-51, 72–74 (KLL), 103–106 (GFPR), and Gln-110 contribute to the AMP site. An LID region spans residues 144 to 181 (NRYVHVPSGRVYNLQYNPPKVPGLDDITGEPLTKRLDD). Residues Arg-145 and 154-155 (VY) each bind GTP. AMP contacts are provided by Arg-178 and Arg-189. Ser-218 contributes to the GTP binding site.

Belongs to the adenylate kinase family. AK3 subfamily. Monomer.

It is found in the mitochondrion matrix. It carries out the reaction a ribonucleoside 5'-triphosphate + AMP = a ribonucleoside 5'-diphosphate + ADP. Functionally, involved in maintaining the homeostasis of cellular nucleotides by catalyzing the interconversion of nucleoside phosphates. Has GTP:AMP phosphotransferase and ITP:AMP phosphotransferase activities. Does not accept ATP as phosphate donor. The protein is GTP:AMP phosphotransferase, mitochondrial of Saccharomyces cerevisiae (strain ATCC 204508 / S288c) (Baker's yeast).